The primary structure comprises 403 residues: 3-(3-hydroxy-phenyl)propionate transporter (403 aa).

The Cytoplasmic segment spans residues 1-16; it reads MSTRTPSSSSSRLMLT. The chain crosses the membrane as a helical span at residues 17–37; the sequence is IGLCFLVALMEGLDLQAAGIA. At 38 to 53 the chain is on the periplasmic side; sequence AGGIAQAFALDKMQMG. A helical membrane pass occupies residues 54–74; sequence WIFSAGILGLLPGALVGGMLA. Residues 75–81 are Cytoplasmic-facing; that stretch reads DRYGRKR. The helical transmembrane segment at 82–102 threads the bilayer; the sequence is ILIGSVALFGLFSLATAIAWD. Residues 103-105 are Periplasmic-facing; it reads FPS. A helical transmembrane segment spans residues 106–126; it reads LVFARLMTGVGLGAALPNLIA. At 127-142 the chain is on the cytoplasmic side; it reads LTSEAAGPRFRGTAVS. A helical membrane pass occupies residues 143–163; the sequence is LMYCGVPIGAALAATLGFAGA. A topological domain (periplasmic) is located at residue Asn164. The chain crosses the membrane as a helical span at residues 165 to 185; that stretch reads LAWQTVFWVGGVVPLILVPLL. At 186 to 217 the chain is on the cytoplasmic side; that stretch reads MRWLPESAVFAGEKQSAPPLRALFAPETATAT. Residues 218–238 traverse the membrane as a helical segment; it reads LLLWLCYFFTLLVVYMLINWL. At 239–253 the chain is on the periplasmic side; it reads PLLLVEQGFQPSQAA. The chain crosses the membrane as a helical span at residues 254 to 274; it reads GVMFALQMGAASGTLMLGALM. At 275-279 the chain is on the cytoplasmic side; sequence DKLRP. Residues 280–300 traverse the membrane as a helical segment; sequence VTMSLLIYSGMLASLLALGTV. Topologically, residues 301 to 306 are periplasmic; it reads SSFNGM. Residues 307–327 traverse the membrane as a helical segment; that stretch reads LLAGFVAGLFATGGQSVLYAL. Residues 328 to 339 are Cytoplasmic-facing; it reads APLFYSSQIRAT. Residues 340 to 360 form a helical membrane-spanning segment; it reads GVGTAVAVGRLGAMSGPLLAG. At 361-369 the chain is on the periplasmic side; it reads KMLALGTGT. Residues 370–390 form a helical membrane-spanning segment; it reads VGVMAASAPGILVAGLAVFIL. Residues 391-403 lie on the Cytoplasmic side of the membrane; the sequence is MSRRSRIQPCADA.

Belongs to the major facilitator superfamily. Aromatic acid:H(+) symporter (AAHS) (TC 2.A.1.15) family.

It is found in the cell inner membrane. It carries out the reaction 3-(3-hydroxyphenyl)propanoate(in) + H(+)(in) = 3-(3-hydroxyphenyl)propanoate(out) + H(+)(out). With respect to regulation, inhibited by carbonyl cyanide m-chlorophenylhydrazone (CCCP), which dissipates the proton motive force. Functionally, uptake of 3-(3-hydroxyphenyl)propionate (3HPP) across the cytoplasmic membrane. Transport is driven by the proton motive force. Does not transport benzoate, 3-hydroxybenzoate or gentisate. The chain is 3-(3-hydroxy-phenyl)propionate transporter from Escherichia coli (strain K12).